Here is a 147-residue protein sequence, read N- to C-terminus: Hemoglobin subunit beta (147 aa).

The Globin domain occupies 3 to 147; sequence EWTDKERSII…VVSALGKQYH (145 aa). Heme b-binding residues include histidine 64 and histidine 93.

This sequence belongs to the globin family. Heterotetramer of two alpha chains and two beta chains. As to expression, red blood cells.

Its function is as follows. Involved in oxygen transport from gills to the various peripheral tissues. This chain is Hemoglobin subunit beta (hbb), found in Trematomus hansoni (Striped rockcod).